The primary structure comprises 199 residues: Holliday junction branch migration complex subunit RuvA (199 aa).

Positions 1–64 are domain I; it reads MIGRISGLLL…EDGHFLYGFA (64 aa). Residues 65-143 form a domain II region; that stretch reads TDEERTAFRQ…KALPQVAGAR (79 aa). A flexible linker region spans residues 144-154; sequence LAAVAGGAPDA. A domain III region spans residues 154-199; that stretch reads AKSDILNALLALGYNEKEALGAMKGLAEDTGVSDGIRQALKLLSKA.

Belongs to the RuvA family. In terms of assembly, homotetramer. Forms an RuvA(8)-RuvB(12)-Holliday junction (HJ) complex. HJ DNA is sandwiched between 2 RuvA tetramers; dsDNA enters through RuvA and exits via RuvB. An RuvB hexamer assembles on each DNA strand where it exits the tetramer. Each RuvB hexamer is contacted by two RuvA subunits (via domain III) on 2 adjacent RuvB subunits; this complex drives branch migration. In the full resolvosome a probable DNA-RuvA(4)-RuvB(12)-RuvC(2) complex forms which resolves the HJ.

The protein localises to the cytoplasm. In terms of biological role, the RuvA-RuvB-RuvC complex processes Holliday junction (HJ) DNA during genetic recombination and DNA repair, while the RuvA-RuvB complex plays an important role in the rescue of blocked DNA replication forks via replication fork reversal (RFR). RuvA specifically binds to HJ cruciform DNA, conferring on it an open structure. The RuvB hexamer acts as an ATP-dependent pump, pulling dsDNA into and through the RuvAB complex. HJ branch migration allows RuvC to scan DNA until it finds its consensus sequence, where it cleaves and resolves the cruciform DNA. This Azoarcus sp. (strain BH72) protein is Holliday junction branch migration complex subunit RuvA.